The chain runs to 276 residues: 4-chlorobenzoyl coenzyme A dehalogenase-1 (276 aa).

Substrate is bound at residue 66 to 71 (AGFDLE). Catalysis depends on His93, which acts as the Proton acceptor. Gly117 is a binding site for substrate. Asp148 acts as the Nucleophile in catalysis. Residue Arg261 participates in substrate binding.

Belongs to the enoyl-CoA hydratase/isomerase family. Homotetramer.

The enzyme catalyses 4-chlorobenzoyl-CoA + H2O = 4-hydroxybenzoyl-CoA + chloride + H(+). It functions in the pathway xenobiotic degradation; 4-chlorobenzoate degradation; 4-hydroxybenzoate from 4-chlorobenzoate: step 2/3. In terms of biological role, dehalogenates 4-chlorobenzoyl-CoA, 4-iodobenzoyl-CoA, 4-bromobenzoyl-CoA and, at a slower rate, 4-fluorobenzoyl-CoA. Does not dehalogenate 2-chlorobenzoyl-CoA or 3-chlorobenzoyl-CoA. This Arthrobacter sp protein is 4-chlorobenzoyl coenzyme A dehalogenase-1.